We begin with the raw amino-acid sequence, 173 residues long: Large ribosomal subunit protein uL10 (173 aa).

It belongs to the universal ribosomal protein uL10 family. As to quaternary structure, part of the ribosomal stalk of the 50S ribosomal subunit. The N-terminus interacts with L11 and the large rRNA to form the base of the stalk. The C-terminus forms an elongated spine to which L12 dimers bind in a sequential fashion forming a multimeric L10(L12)X complex.

Functionally, forms part of the ribosomal stalk, playing a central role in the interaction of the ribosome with GTP-bound translation factors. The chain is Large ribosomal subunit protein uL10 from Chloroherpeton thalassium (strain ATCC 35110 / GB-78).